Here is a 2181-residue protein sequence, read N- to C-terminus: Non-reducing polyketide synthase subA (2181 aa).

The interval 74-180 is N-terminal acylcarrier protein transacylase domain (SAT); the sequence is QWVKGNSTQP…LALCCGAYID (107 aa). Residues 347-779 form the Ketosynthase family 3 (KS3) domain; the sequence is QAQLLVLGPV…GTNAAMLVCQ (433 aa). Residues Cys525, His661, and His702 each act as for beta-ketoacyl synthase activity in the active site. The malonyl-CoA:ACP transacylase (MAT) domain stretch occupies residues 891-1193; that stretch reads VLAGQTGRRV…SFYPAALGEP (303 aa). Ser977 serves as the catalytic For acyl/malonyl transferase activity. The N-terminal hotdog fold stretch occupies residues 1269 to 1401; sequence VSLIGKTQNA…GVITLQEVYS (133 aa). The 311-residue stretch at 1269-1579 folds into the PKS/mFAS DH domain; sequence VSLIGKTQNA…FQKIAISSLK (311 aa). Positions 1276-1573 are product template (PT) domain; that stretch reads QNAGVQTVEY…TILGAKFQKI (298 aa). Residues 1425 to 1579 are C-terminal hotdog fold; the sequence is SASVVQGDFI…FQKIAISSLK (155 aa). The tract at residues 1652–1673 is disordered; the sequence is ISGSSRSTSSSPPSLESRSQAM. Residues 1653–1670 are compositionally biased toward low complexity; it reads SGSSRSTSSSPPSLESRS. Residues 1677 to 1753 enclose the Carrier domain; that stretch reads EITEGAGSAL…TLFHTIFPQQ (77 aa). The residue at position 1713 (Ser1713) is an O-(pantetheine 4'-phosphoryl)serine. The methyltransferase (CMeT) domain stretch occupies residues 1982-2164; sequence EFMNCLFSYN…QSGFGHVDWT (183 aa).

The protein operates within secondary metabolite biosynthesis; terpenoid biosynthesis. Non-reducing polyketide synthase; part of the gene cluster that mediates the biosynthesis of the immunosuppressants subglutinols, meroterpenoids consisting of an alpha-pyrone (4-hydroxy-5,6-dimethyl-2-pyrone) moiety attached to a decalin core fused to a five-membered cyclic ether carrying a prenylside chain. The first step of the pathway is the synthesis of the alpha-pyrone moiety by the polyketide synthase subA via condensation of one acetyl-CoA starter unit with 3 malonyl-CoA units and 2 methylations. The alpha-pyrone is then combined with geranylgeranyl pyrophosphate (GGPP) formed by the GGPP synthase subD through the action of the prenyltransferase subC to yield a linear alpha-pyrone diterpenoid. Subsequent steps in the subglutinol biosynthetic pathway involve the decalin core formation, which is thought to be initiated by the epoxidation of the C10-C11 olefin by the FAD-dependent oxidoreductase subE. The following cyclization cascade would be catalyzed by the terpene cyclase subB. Lastly, the FAD-dependent dehydrogenase subF probably catalyzes the five-membered cyclic ether formation to complete the formation of subglutinol A. Subsequent redox reactions appear to give rise to subglutinol C and D, however, it remains unclear which enzymes are responsible for these transformations. SubD may have secondary function in the conversion of the identified subglutinols to subglutinol analog 45, which seems to be the major product of the cluster. In Metarhizium robertsii (strain ARSEF 23 / ATCC MYA-3075) (Metarhizium anisopliae (strain ARSEF 23)), this protein is Non-reducing polyketide synthase subA.